The following is a 427-amino-acid chain: Interferon regulatory factor 3 (427 aa).

Thr3 bears the Phosphothreonine mark. A DNA-binding region (IRF tryptophan pentad repeat) is located at residues 5 to 111 (KPRILPWLVS…DPHKIYEFVN (107 aa)). Position 14 is a phosphoserine (Ser14). Residue Thr75 is modified to Phosphothreonine. Basic and acidic residues predominate over residues 91–107 (RLAEDRSKDPHDPHKIY). A disordered region spans residues 91–136 (RLAEDRSKDPHDPHKIYEFVNSGVGDFSQPDTSPDTNGGGSTSDTQ). Residues Ser97 and Ser123 each carry the phosphoserine modification. A Nuclear export signal motif is present at residues 139 to 149 (ILDELLGNMVL). A mediates interaction with ZDHHC11 region spans residues 141–427 (DELLGNMVLA…GMDFQGPGES (287 aa)). Ser175 is modified ((Microbial infection) Phosphoserine). Residue Thr180 is modified to Phosphothreonine. Phosphoserine is present on Ser188. A Glycyl lysine isopeptide (Lys-Gly) (interchain with G-Cter in ISG15) cross-link involves residue Lys193. Positions 200-360 (EEWEFEVTAF…SWPQDQPWTK (161 aa)) are interaction with HERC5. Residues Thr237, Thr244, and Thr253 each carry the phosphothreonine modification. A disulfide bridge links Cys267 with Cys289. Residues Lys360 and Lys366 each participate in a glycyl lysine isopeptide (Lys-Gly) (interchain with G-Cter in ISG15) cross-link. An N6-acetyllysine modification is found at Lys366. Ser385 bears the Phosphoserine mark. At Ser386 the chain carries Diphosphoserine. Ser386 is modified (phosphoserine; by TBK1). Ser396 carries the post-translational modification Phosphoserine; by IKKE and TBK1. Ser398 is modified (phosphoserine). Position 404 is a phosphothreonine (Thr404). The residue at position 427 (Ser427) is a Phosphoserine.

It belongs to the IRF family. As to quaternary structure, monomer. Homodimer; phosphorylation-induced. Interacts (when phosphorylated) with CREBBP. Interacts with MAVS (via phosphorylated pLxIS motif). Interacts with TICAM1 (via phosphorylated pLxIS motif). Interacts with STING1 (via phosphorylated pLxIS motif). Interacts with IKBKE and TBK1. Interacts with TICAM2. Interacts with RBCK1. Interacts with HERC5. Interacts with DDX3X (phosphorylated at 'Ser-102'); the interaction allows the phosphorylation and activation of IRF3 by IKBKE. Interacts with TRIM21 and ULK1, in the presence of TRIM21; this interaction leads to IRF3 degradation by autophagy. Interacts with RIOK3; RIOK3 probably mediates the interaction of TBK1 with IRF3. Interacts with ILRUN; the interaction inhibits IRF3 binding to its DNA consensus sequence. Interacts with LYAR; this interaction impairs IRF3 DNA-binding activity. Interacts with TRAF3. Interacts with ZDHHC11; ZDHHC11 recruits IRF3 to STING1 upon DNA virus infection and thereby promotes IRF3 activation. Interacts with HSP90AA1; the interaction mediates IRF3 association with TOMM70. Interacts with BCL2; the interaction decreases upon Sendai virus infection. Interacts with BAX; the interaction is direct, increases upon Sendai virus infection and mediates the formation of the apoptosis complex TOMM70:HSP90AA1:IRF3:BAX. Interacts with DDX56. Interacts with NBR1. (Microbial infection) Interacts with rotavirus A NSP1 (via pLxIS motif); this interaction leads to the proteasome-dependent degradation of IRF3. In terms of assembly, (Microbial infection) Interacts with herpes virus 8/HHV-8 protein VIRF1. As to quaternary structure, (Microbial infection) Interacts with Seneca Valley virus protease 3C; this interaction is involved in the suppression of IRF3 expression and phosphorylation by the virus. (Microbial infection) Interacts with herpes virus 2/HHV-2 protein ICP27; this interaction inhibits IRF3 phosphorylation and nuclear translocation. In terms of assembly, (Microbial infection) Interacts with human cytomegalovirus protein UL44; this interaction prevents IRF3 binding to its promoters. As to quaternary structure, (Microbial infection) Interacts with the two fragments of MERS-COV protein N produced by CASP6 through proteolytic cleavage; both interactions inhibit IRF3 nuclear translocation after activation and IFN signaling. Post-translationally, constitutively phosphorylated on many Ser/Thr residues. Activated following phosphorylation by TBK1 and IKBKE. Innate adapter proteins, such as MAVS, STING1 or TICAM1, are first activated by viral RNA, cytosolic DNA, and bacterial lipopolysaccharide (LPS), respectively, leading to activation of the kinases TBK1 and IKBKE. These kinases then phosphorylate the adapter proteins on the pLxIS motif, leading to recruitment of IRF3, thereby licensing IRF3 for phosphorylation by TBK1. Phosphorylation at Ser-386 is followed by pyrophosphorylation at the same residue, promoting phosphorylation at Ser-396. Phosphorylated IRF3 dissociates from the adapter proteins, dimerizes, and then enters the nucleus to induce IFNs. Pyrophosphorylated by UAP1 following phosphorylation at Ser-386 by TBK1. Pyrophosphorylation promotes subsequent phosphorylation at Ser-396, leading to homodimerization of IRF3. In terms of processing, acetylation at Lys-366 by KAT8 inhibits recruimtent to promoters and transcription factor activity. Acetylation by KAT8 is promoted by phosphorylation at Ser-396. Post-translationally, ubiquitinated; ubiquitination involves RBCK1 leading to proteasomal degradation. Polyubiquitinated; ubiquitination involves TRIM21 leading to proteasomal degradation. Ubiquitinated by UBE3C, leading to its degradation. Deubiquitinated by USP5 on both 'Lys-48'-linked unanchored and 'Lys-63'-linked anchored polyubiquitin, leading to inhibition of anti-RNA viral innate immunity. ISGylated by HERC5 resulting in sustained IRF3 activation and in the inhibition of IRF3 ubiquitination by disrupting PIN1 binding. The phosphorylation state of IRF3 does not alter ISGylation. In terms of processing, proteolytically cleaved by apoptotic caspases during apoptosis, leading to its inactivation. Cleavage by CASP3 during virus-induced apoptosis inactivates it, preventing cytokine overproduction. Post-translationally, (Microbial infection) ISGylated. ISGylation is cleaved and removed by SARS-COV-2 nsp3 which attenuates type I interferon responses. (Microbial infection) Phosphorylation and subsequent activation of IRF3 is inhibited by vaccinia virus protein E3. In terms of processing, (Microbial infection) Phosphorylated by herpes simplex virus 1/HHV-1 US3 at Ser-175 to prevent IRF3 activation. In terms of tissue distribution, expressed constitutively in a variety of tissues.

It localises to the cytoplasm. The protein resides in the nucleus. The protein localises to the mitochondrion. With respect to regulation, in the absence of viral infection, maintained as a monomer in an autoinhibited state. Phosphorylation by TBK1 and IKBKE disrupts this autoinhibition leading to the liberation of the DNA-binding and dimerization activities and its nuclear localization where it can activate type I IFN and ISG genes. Phosphorylation and activation follow the following steps: innate adapter proteins, such as MAVS, STING1 or TICAM1, are first activated by viral RNA, cytosolic DNA and bacterial lipopolysaccharide (LPS), respectively, leading to activation of the kinases TBK1 and IKBKE. These kinases then phosphorylate the adapter proteins on their pLxIS motif, leading to recruitment of IRF3, thereby licensing IRF3 for phosphorylation by TBK1. Phosphorylated IRF3 dissociates from the adapter proteins, dimerizes, and then enters the nucleus to induce IFNs. (Microbial infection) Activated upon coronavirus SARS-CoV-2 infection. Key transcriptional regulator of type I interferon (IFN)-dependent immune responses which plays a critical role in the innate immune response against DNA and RNA viruses. Regulates the transcription of type I IFN genes (IFN-alpha and IFN-beta) and IFN-stimulated genes (ISG) by binding to an interferon-stimulated response element (ISRE) in their promoters. Acts as a more potent activator of the IFN-beta (IFNB) gene than the IFN-alpha (IFNA) gene and plays a critical role in both the early and late phases of the IFNA/B gene induction. Found in an inactive form in the cytoplasm of uninfected cells and following viral infection, double-stranded RNA (dsRNA), or toll-like receptor (TLR) signaling, is phosphorylated by IKBKE and TBK1 kinases. This induces a conformational change, leading to its dimerization and nuclear localization and association with CREB binding protein (CREBBP) to form dsRNA-activated factor 1 (DRAF1), a complex which activates the transcription of the type I IFN and ISG genes. Can activate distinct gene expression programs in macrophages and can induce significant apoptosis in primary macrophages. In response to Sendai virus infection, is recruited by TOMM70:HSP90AA1 to mitochondrion and forms an apoptosis complex TOMM70:HSP90AA1:IRF3:BAX inducing apoptosis. Key transcription factor regulating the IFN response during SARS-CoV-2 infection. In Homo sapiens (Human), this protein is Interferon regulatory factor 3.